Consider the following 281-residue polypeptide: Transcription factor LBX1 (281 aa).

The segment covering 1–20 has biased composition (basic and acidic residues); sequence MTSKEDGKAAPGEERRRSPL. The disordered stretch occupies residues 1–35; sequence MTSKEDGKAAPGEERRRSPLDHLPPPANSNKPLTP. Positions 125–184 form a DNA-binding region, homeobox; the sequence is RRKSRTAFTNHQIYELEKRFLYQKYLSPADRDQIAQQLGLTNAQVITWFQNRRAKLKRDL. A disordered region spans residues 214 to 281; sequence NSEATAGGGG…EEDEEIDVDD (68 aa). Residues 253–267 show a composition bias toward polar residues; that stretch reads SPASPLTDQPASSQD. Over residues 268–281 the composition is skewed to acidic residues; sequence CSEDEEDEEIDVDD.

Interacts with SKOR1 which acts as a transcriptional corepressor.

Its subcellular location is the nucleus. Transcription factor required for the development of GABAergic interneurons in the dorsal horn of the spinal cord and migration and further development of hypaxial muscle precursor cells for limb muscles, diaphragm and hypoglossal cord. The protein is Transcription factor LBX1 (LBX1) of Homo sapiens (Human).